A 437-amino-acid chain; its full sequence is ATP-dependent protease ATPase subunit HslU (437 aa).

Residues valine 18, 60-65 (GCGKTE), aspartate 250, glutamate 315, and arginine 387 contribute to the ATP site.

It belongs to the ClpX chaperone family. HslU subfamily. In terms of assembly, a double ring-shaped homohexamer of HslV is capped on each side by a ring-shaped HslU homohexamer. The assembly of the HslU/HslV complex is dependent on binding of ATP.

The protein resides in the cytoplasm. In terms of biological role, ATPase subunit of a proteasome-like degradation complex; this subunit has chaperone activity. The binding of ATP and its subsequent hydrolysis by HslU are essential for unfolding of protein substrates subsequently hydrolyzed by HslV. HslU recognizes the N-terminal part of its protein substrates and unfolds these before they are guided to HslV for hydrolysis. The sequence is that of ATP-dependent protease ATPase subunit HslU from Methylorubrum extorquens (strain PA1) (Methylobacterium extorquens).